A 277-amino-acid chain; its full sequence is Undecaprenyl-diphosphatase (277 aa).

The next 8 helical transmembrane spans lie at 1-21 (MDII…FLPV), 38-58 (SSLA…LWFF), 93-113 (LVWY…LFES), 118-138 (LFAG…TILY), 168-188 (AILP…VIGL), 191-211 (EFAA…AFVV), 222-242 (FNAL…YLAI), and 256-276 (IFAY…ITHL).

The protein belongs to the UppP family.

It is found in the cell membrane. The catalysed reaction is di-trans,octa-cis-undecaprenyl diphosphate + H2O = di-trans,octa-cis-undecaprenyl phosphate + phosphate + H(+). In terms of biological role, catalyzes the dephosphorylation of undecaprenyl diphosphate (UPP). This chain is Undecaprenyl-diphosphatase, found in Methanobrevibacter smithii (strain ATCC 35061 / DSM 861 / OCM 144 / PS).